The chain runs to 664 residues: Protein fem-1 homolog CG6966 (664 aa).

6 ANK repeats span residues 40-70, 82-111, 115-144, 148-177, 181-210, and 213-242; these read NGATPLVISCRNGHYDIVEYLLTKCRANVEQ, EDAPPLWCAAAAGHLGIVKMLVRRGANVNS, TNSTPLRAACFDGHYEIVKYLVHHGADFEV, HGHTCLMIACYKGHFRIAQYLLSLNADVNR, KGNTALHDCAESGSLQILQLLLKHGATMDV, and YGMTPLLAASVTGHMPIVEHLITLPCVSRE. TPR repeat units follow at residues 245–279 and 335–368; these read IHALELLGATYVDRKRDMAAALNLWRRALEERAVE and SYYIRFRGAHYADAGRFDRCIELWSYALTMQQKI. Residues 433 to 460 are disordered; that stretch reads QQKDQQHPQKQLPAADKSPSCSASSSAS. The span at 450-460 shows a compositional bias: low complexity; the sequence is SPSCSASSSAS. ANK repeat units follow at residues 529-571 and 575-605; these read FDRT…DPNA and AGNTPLHLATMQPYVEPLSHILLEGGAHLDT.

It belongs to the fem-1 family. In terms of assembly, component of a CRL2 E3 ubiquitin-protein ligase complex, also named ECS (Elongin BC-CUL2/5-SOCS-box protein) complex.

It participates in protein modification; protein ubiquitination. In terms of biological role, substrate-recognition component of a Cul2-RING (CRL2) E3 ubiquitin-protein ligase complex of the DesCEND (destruction via C-end degrons) pathway, which recognizes a C-degron located at the extreme C terminus of target proteins, leading to their ubiquitination and degradation. The C-degron recognized by the DesCEND pathway is usually a motif of less than ten residues and can be present in full-length proteins, truncated proteins or proteolytically cleaved forms. The polypeptide is Protein fem-1 homolog CG6966 (Drosophila melanogaster (Fruit fly)).